Consider the following 197-residue polypeptide: Phosphoheptose isomerase (197 aa).

The region spanning 36–197 (LFAALANNGR…IDALLLGDTE (162 aa)) is the SIS domain. 51–53 (NGG) contacts substrate. Positions 60 and 64 each coordinate Zn(2+). Residues E64, 93-94 (ND), 119-121 (STS), S124, and Q174 contribute to the substrate site. Zn(2+)-binding residues include Q174 and H182.

It belongs to the SIS family. GmhA subfamily. As to quaternary structure, homotetramer. Requires Zn(2+) as cofactor.

The protein resides in the cytoplasm. The catalysed reaction is 2 D-sedoheptulose 7-phosphate = D-glycero-alpha-D-manno-heptose 7-phosphate + D-glycero-beta-D-manno-heptose 7-phosphate. It participates in carbohydrate biosynthesis; D-glycero-D-manno-heptose 7-phosphate biosynthesis; D-glycero-alpha-D-manno-heptose 7-phosphate and D-glycero-beta-D-manno-heptose 7-phosphate from sedoheptulose 7-phosphate: step 1/1. Functionally, catalyzes the isomerization of sedoheptulose 7-phosphate in D-glycero-D-manno-heptose 7-phosphate. The chain is Phosphoheptose isomerase from Bordetella avium (strain 197N).